The following is a 364-amino-acid chain: Medium-wave-sensitive opsin 1 (364 aa).

A disordered region spans residues 1 to 24 (MAQRWDPQRLAGGQPQDSHEDSTQ). Residues 1-52 (MAQRWDPQRLAGGQPQDSHEDSTQSSIFTYTNSNATRGPFEGPNYHIAPRWV) are Extracellular-facing. The tract at residues 17 to 43 (DSHEDSTQSSIFTYTNSNATRGPFEGP) is required for 11-cis-retinal regeneration. Asparagine 34 carries an N-linked (GlcNAc...) asparagine glycan. The chain crosses the membrane as a helical span at residues 53 to 77 (YHITSTWMIIVVIASVFTNGLVLVA). The Cytoplasmic segment spans residues 78–89 (TMKFKKLRHPLN). A helical membrane pass occupies residues 90 to 115 (WILVNLAIADLAETVIASTISVVNQL). Residues 116 to 129 (YGYFVLGHPLCVVE) lie on the Extracellular side of the membrane. Residues cysteine 126 and cysteine 203 are joined by a disulfide bond. Residues 130-149 (GYTVSVCGITGLWSLAIISW) traverse the membrane as a helical segment. The Cytoplasmic portion of the chain corresponds to 150 to 168 (ERWLVVCKPFGNMRFDAKL). Residues 169-192 (AIVGIAFSWIWSAVWTAPPIFGWS) form a helical membrane-spanning segment. Topologically, residues 193-218 (RYWPYGLKTSCGPDVFSGTSYPGVQS) are extracellular. Residues 219–246 (YMMVLMVTCCIIPLSIIILCYLQVWLAI) traverse the membrane as a helical segment. The Cytoplasmic segment spans residues 247–268 (RAVAKQQKESESTQKAEKEVTR). The chain crosses the membrane as a helical span at residues 269–292 (MVVVMVFAYCLCWGPYTFFACFAT). The Extracellular segment spans residues 293 to 300 (ANPGYAFH). A helical transmembrane segment spans residues 301-320 (PLVAALPAYFAKSATIYNPI). Lysine 312 is modified (N6-(retinylidene)lysine). Residues 321–364 (IYVFMNRQFRNCILQLFGKKVDDTSELSSASKTEASSVSSVSPA) lie on the Cytoplasmic side of the membrane.

Belongs to the G-protein coupled receptor 1 family. Opsin subfamily. As to quaternary structure, monomer. Homodimer. Homotetramer. In terms of processing, O-glycosylated. Post-translationally, phosphorylated on some or all of the serine and threonine residues present in the C-terminal region. Expressed in cone photoreceptor cells.

It localises to the membrane. In terms of biological role, visual pigments are the light-absorbing molecules that mediate vision. They consist of an apoprotein, opsin, covalently linked to cis-retinal. May increase spectral sensitivity in dim light. This Sciurus carolinensis (Eastern gray squirrel) protein is Medium-wave-sensitive opsin 1 (OPN1MW).